The chain runs to 1025 residues: DNA ligase 4 (1025 aa).

The disordered stretch occupies residues 1–36 (MMQPTPAPSSAPGSPQRTQAEPEMETPSYPQPPQNV). Positions 289, 291, 292, 296, 349, 387, 447, 452, 469, and 471 each coordinate ATP. The active-site N6-AMP-lysine intermediate is Lys291. Mg(2+) is bound at residue Glu349. Glu447 contributes to the Mg(2+) binding site. One can recognise a BRCT 1 domain in the interval 667–763 (VKTDIFNGMK…EPAPFKKKYF (97 aa)). The tract at residues 773-904 (ADEYNEDDGE…TTPDVDGDVK (132 aa)) is disordered. Composition is skewed to acidic residues over residues 775–785 (EYNEDDGEEEG) and 806–816 (SETEDEDEEQA). Over residues 817-838 (PEIKEEQDGELHEWLKVDDRKS) the composition is skewed to basic and acidic residues. The span at 845–870 (DEEDSVTEDDSDNADVADEEEPDLDD) shows a compositional bias: acidic residues. Basic and acidic residues predominate over residues 891–904 (RHRETTPDVDGDVK). Positions 915–1025 (DPDVIFKHLC…TLLDEEEFAP (111 aa)) constitute a BRCT 2 domain.

The protein belongs to the ATP-dependent DNA ligase family. The cofactor is Mg(2+).

The protein localises to the nucleus. It catalyses the reaction ATP + (deoxyribonucleotide)n-3'-hydroxyl + 5'-phospho-(deoxyribonucleotide)m = (deoxyribonucleotide)n+m + AMP + diphosphate.. Its function is as follows. DNA ligase involved in DNA non-homologous end joining (NHEJ); required for double-strand break (DSB) repair. The sequence is that of DNA ligase 4 (LIG4) from Coprinopsis cinerea (Inky cap fungus).